Here is a 209-residue protein sequence, read N- to C-terminus: A-type ATP synthase subunit D (209 aa).

This sequence belongs to the V-ATPase D subunit family. Has multiple subunits with at least A(3), B(3), C, D, E, F, H, I and proteolipid K(x).

It localises to the cell membrane. Its function is as follows. Component of the A-type ATP synthase that produces ATP from ADP in the presence of a proton gradient across the membrane. The polypeptide is A-type ATP synthase subunit D (Methanosarcina acetivorans (strain ATCC 35395 / DSM 2834 / JCM 12185 / C2A)).